The chain runs to 546 residues: Probable protein kinase UbiB (546 aa).

One can recognise a Protein kinase domain in the interval 124–502 (DFDIKPLASA…RVRQGQSRYL (379 aa)). Residues 130-138 (LASASIAQV) and K153 each bind ATP. D288 functions as the Proton acceptor in the catalytic mechanism. 2 consecutive transmembrane segments (helical) span residues 501–521 (YLFG…INRP) and 522–542 (DWQM…LIGW).

Belongs to the ABC1 family. UbiB subfamily.

It localises to the cell inner membrane. It participates in cofactor biosynthesis; ubiquinone biosynthesis [regulation]. Is probably a protein kinase regulator of UbiI activity which is involved in aerobic coenzyme Q (ubiquinone) biosynthesis. The protein is Probable protein kinase UbiB of Enterobacter sp. (strain 638).